The chain runs to 474 residues: GTPase Der (474 aa).

2 EngA-type G domains span residues 3–167 and 204–379; these read FTVA…GVDR and LRVA…MVWN. GTP is bound by residues 9–16, 56–60, 119–122, 210–217, 257–261, and 322–325; these read GRPNVGKS, DTAGL, NKSE, GRPNAGKS, DTAGM, and NKWD. Positions 380 to 464 constitute a KH-like domain; it reads KRISTAKLNR…PIRIHLKASE (85 aa).

This sequence belongs to the TRAFAC class TrmE-Era-EngA-EngB-Septin-like GTPase superfamily. EngA (Der) GTPase family. Associates with the 50S ribosomal subunit.

GTPase that plays an essential role in the late steps of ribosome biogenesis. This Allorhizobium ampelinum (strain ATCC BAA-846 / DSM 112012 / S4) (Agrobacterium vitis (strain S4)) protein is GTPase Der.